A 369-amino-acid polypeptide reads, in one-letter code: Glutamate 5-kinase (369 aa).

Lys-7 contacts ATP. The substrate site is built by Ser-48, Asp-135, and Asn-147. ATP is bound by residues 167–168 (TD) and 208–214 (SGGMASK). Residues 275–353 (AGALHLDEGA…HEIAALLGIE (79 aa)) form the PUA domain.

It belongs to the glutamate 5-kinase family.

It is found in the cytoplasm. It catalyses the reaction L-glutamate + ATP = L-glutamyl 5-phosphate + ADP. The protein operates within amino-acid biosynthesis; L-proline biosynthesis; L-glutamate 5-semialdehyde from L-glutamate: step 1/2. In terms of biological role, catalyzes the transfer of a phosphate group to glutamate to form L-glutamate 5-phosphate. This chain is Glutamate 5-kinase, found in Gloeobacter violaceus (strain ATCC 29082 / PCC 7421).